Here is a 487-residue protein sequence, read N- to C-terminus: Malonate-semialdehyde dehydrogenase (487 aa).

Residues alanine 150, phenylalanine 152, lysine 176, glutamate 179, arginine 180, serine 229, and threonine 251 each contribute to the NAD(+) site. The active-site Nucleophile is cysteine 284. Glutamate 382 is a binding site for NAD(+).

Belongs to the aldehyde dehydrogenase family. IolA subfamily. In terms of assembly, homotetramer.

It carries out the reaction 3-oxopropanoate + NAD(+) + CoA + H2O = hydrogencarbonate + acetyl-CoA + NADH + H(+). The enzyme catalyses 2-methyl-3-oxopropanoate + NAD(+) + CoA + H2O = propanoyl-CoA + hydrogencarbonate + NADH + H(+). Its pathway is polyol metabolism; myo-inositol degradation into acetyl-CoA; acetyl-CoA from myo-inositol: step 7/7. Functionally, catalyzes the oxidation of malonate semialdehyde (MSA) and methylmalonate semialdehyde (MMSA) into acetyl-CoA and propanoyl-CoA, respectively. Is involved in a myo-inositol catabolic pathway. Bicarbonate, and not CO2, is the end-product of the enzymatic reaction. This chain is Malonate-semialdehyde dehydrogenase, found in Bacillus subtilis subsp. natto.